The primary structure comprises 61 residues: Small ribosomal subunit protein uS14 (61 aa).

C24, C27, C40, and C43 together coordinate Zn(2+).

This sequence belongs to the universal ribosomal protein uS14 family. Zinc-binding uS14 subfamily. Part of the 30S ribosomal subunit. Contacts proteins S3 and S10. Zn(2+) serves as cofactor.

In terms of biological role, binds 16S rRNA, required for the assembly of 30S particles and may also be responsible for determining the conformation of the 16S rRNA at the A site. The polypeptide is Small ribosomal subunit protein uS14 (Rhodococcus erythropolis (strain PR4 / NBRC 100887)).